The following is a 192-amino-acid chain: Fe/S biogenesis protein NfuA (192 aa).

[4Fe-4S] cluster-binding residues include cysteine 149 and cysteine 152.

It belongs to the NfuA family. Homodimer. It depends on [4Fe-4S] cluster as a cofactor.

In terms of biological role, involved in iron-sulfur cluster biogenesis. Binds a 4Fe-4S cluster, can transfer this cluster to apoproteins, and thereby intervenes in the maturation of Fe/S proteins. Could also act as a scaffold/chaperone for damaged Fe/S proteins. The sequence is that of Fe/S biogenesis protein NfuA from Shewanella piezotolerans (strain WP3 / JCM 13877).